The primary structure comprises 2656 residues: 1-phosphatidylinositol 3-phosphate 5-kinase (2656 aa).

A disordered region spans residues 24–159 (FGTDDSQKDF…NSTNNDTSSN (136 aa)). 2 stretches are compositionally biased toward low complexity: residues 59 to 107 (NNNN…NNNN) and 124 to 159 (SNTT…TSSN). An FYVE-type zinc finger spans residues 198–255 (DHSSAVCYECSEEFTTFKRRHHCRLCGQIFCWKCSQKTLTDGKGERVRVCNFCYRRYM). Residues C204, C207, C220, C223, C228, C231, C247, and C250 each contribute to the Zn(2+) site. Positions 304 to 331 (NVSLGNSGDNSSFVQSPNNNFSQSPTFS) are enriched in polar residues. Disordered stretches follow at residues 304-383 (NVSL…NNQQ), 465-495 (DHHQ…SPIV), 517-570 (DNLD…SSSS), 618-657 (NNND…NTSF), 670-823 (TIGR…QQQP), 1115-1150 (SNSI…NNST), 1633-1659 (RSKR…QILI), 1710-1844 (VNNN…SSTP), 2031-2127 (QQQQ…SISP), 2179-2208 (NQQQ…SIIE), 2246-2304 (QQGD…SSNS), and 2617-2656 (NNNN…QINK). Over residues 332 to 355 (QQQQQQQQQQQQQQQQQQQQQQQQ) the composition is skewed to low complexity. 3 stretches are compositionally biased toward polar residues: residues 356 to 371 (TTGV…NSTL), 473 to 489 (SNSH…TPSG), and 542 to 557 (SHSS…TVST). Composition is skewed to low complexity over residues 558-570 (GESN…SSSS), 618-637 (NNND…NNNN), 674-730 (NNNN…NLPN), 743-757 (QQQQ…QPQP), and 811-823 (PSSS…QQQP). Composition is skewed to low complexity over residues 1639 to 1656 (QQQQ…PQPQ) and 1710 to 1746 (VNNN…NNNN). Coiled coils occupy residues 1741-1823 (NNNN…NNNN) and 2019-2061 (KRIS…QQEQ). Residues 1750–1798 (NKSENENENKNENKNENENENENKNENKNENENENKKENENQLEIKNEN) are compositionally biased toward basic and acidic residues. Low complexity-rich tracts occupy residues 1807 to 1833 (NNNN…IDNN), 2031 to 2061 (QQQQ…QQEQ), 2078 to 2107 (SPSS…SETN), and 2118 to 2127 (LSGSPISISP). Residues 2193–2202 (IDEKDDRNTE) are compositionally biased toward basic and acidic residues. Composition is skewed to low complexity over residues 2252–2283 (NNNN…NNNN) and 2618–2647 (NNNN…GNIN). The PIPK domain maps to 2275 to 2596 (NNNNTNNNNE…RFRDAMWLYF (322 aa)).

It localises to the endosome membrane. Its subcellular location is the early endosome membrane. The protein localises to the cytoplasmic vesicle. It is found in the phagosome membrane. The protein resides in the late endosome membrane. The enzyme catalyses a 1,2-diacyl-sn-glycero-3-phospho-(1D-myo-inositol-3-phosphate) + ATP = a 1,2-diacyl-sn-glycero-3-phospho-(1D-myo-inositol-3,5-bisphosphate) + ADP + H(+). It carries out the reaction a 1,2-diacyl-sn-glycero-3-phospho-(1D-myo-inositol) + ATP = a 1,2-diacyl-sn-glycero-3-phospho-(1D-myo-inositol-5-phosphate) + ADP + H(+). It catalyses the reaction L-seryl-[protein] + ATP = O-phospho-L-seryl-[protein] + ADP + H(+). In terms of biological role, dual specificity kinase part of the PI(3,5)P2 regulatory complex which regulates both the synthesis and turnover of phosphatidylinositol 3,5-bisphosphate (PtdIns(3,5)P2). Catalyzes the phosphorylation of phosphatidylinositol 3-phosphate on the fifth hydroxyl of the myo-inositol ring, to form phosphatidylinositol 3,5-bisphosphate. This chain is 1-phosphatidylinositol 3-phosphate 5-kinase (pip5k3), found in Dictyostelium discoideum (Social amoeba).